Here is a 367-residue protein sequence, read N- to C-terminus: MKRVLVAMSGGVDSSVAALLLKEAGYEVVGAMMRFWPDLPPPSLEAGKPRAWESCCTPDAAYEARRVADRLGIPFYLLDYREVFEEEIISPFLQDYAQGRTPNPCARCNTFVKFGALLKQARRLGLDYVATGHYVRKEGLALLRGLDPHKDQTYFLWGTPKEALPHLLFPVGGLTKPEVRALAEKAGLPTARRPESQNLCFVAGDLKGFLKERLKPRPGPLVDALTGEVVGEHEGASLYTLGQRKGLGLYKTHLERYVVGVDPERNVVYVGPKEACYFEGLEGEGLNLLAELPEEVEVQVRYRTPPVRAKVESLSPLRLRFAHPVFAVTPGQSAVFYRGERLLGGAVIRRGLYNLAGLEDPRALTFS.

Residues 7–14 (AMSGGVDS) and M33 each bind ATP. The active-site Nucleophile is C108. Cysteines 108 and 200 form a disulfide. G132 serves as a coordination point for ATP. Residues 150 to 152 (KDQ) are interaction with tRNA. Catalysis depends on C200, which acts as the Cysteine persulfide intermediate. The interaction with tRNA stretch occupies residues 301-302 (RY).

This sequence belongs to the MnmA/TRMU family.

Its subcellular location is the cytoplasm. The enzyme catalyses S-sulfanyl-L-cysteinyl-[protein] + uridine(34) in tRNA + AH2 + ATP = 2-thiouridine(34) in tRNA + L-cysteinyl-[protein] + A + AMP + diphosphate + H(+). Functionally, catalyzes the 2-thiolation of uridine at the wobble position (U34) of tRNA, leading to the formation of s(2)U34. In Thermus thermophilus (strain ATCC BAA-163 / DSM 7039 / HB27), this protein is tRNA-specific 2-thiouridylase MnmA.